Consider the following 203-residue polypeptide: Undecaprenyl phosphate transporter A (203 aa).

Helical transmembrane passes span 16 to 36, 48 to 68, 108 to 128, 137 to 157, and 173 to 193; these read AIFILILLENVLPIVPSEIIL, LSILTLFIIATIASFIGLLIL, YGVWAVFICRFIPVLRVLITI, VVTFTVISLIGTTIWNFGLIL, and LHTYSRIMYVVIIIAVIYFAI.

The protein belongs to the DedA family.

It localises to the cell membrane. Flippase that catalyzes the transport of undecaprenyl phosphate (UndP) across the cytoplasmic membrane, from the external side to the cytoplasmic side. Is involved in UndP recycling during peptidoglycan synthesis. This is Undecaprenyl phosphate transporter A from Staphylococcus aureus (strain NCTC 8325 / PS 47).